Reading from the N-terminus, the 101-residue chain is MDISKAPNPRKLELCRKYFFAGFAFLPFVWAINVCWFFTEAFHKPPFSEQSQIKRYVIYSAVGTLFWLIVLTAWIIIFQTNRTAWGATADYMSFIIPLGSA.

The Lumenal segment spans residues 1–17 (MDISKAPNPRKLELCRK). The helical transmembrane segment at 18–38 (YFFAGFAFLPFVWAINVCWFF) threads the bilayer. The Cytoplasmic portion of the chain corresponds to 39 to 57 (TEAFHKPPFSEQSQIKRYV). A helical membrane pass occupies residues 58-78 (IYSAVGTLFWLIVLTAWIIIF). Residues 79–101 (QTNRTAWGATADYMSFIIPLGSA) are Lumenal-facing.

Belongs to the PEN-2 family. In terms of assembly, component of the gamma-secretase complex, a complex composed of a presenilin (Psn) homodimer, nicastrin (Nct), Aph-1 and Pen-2.

The protein localises to the membrane. Functionally, essential subunit of the gamma-secretase complex, an endoprotease complex that catalyzes the intramembrane cleavage of integral membrane proteins such as Notch. It probably represents the last step of maturation of gamma-secretase, facilitating endoproteolysis of presenilin and conferring gamma-secretase activity. The sequence is that of Gamma-secretase subunit pen-2 (pen-2) from Drosophila melanogaster (Fruit fly).